The primary structure comprises 748 residues: ATP-dependent RNA helicase DRS1 (748 aa).

2 disordered regions span residues 1–72 (MAVK…PEFQ) and 111–211 (RKGG…EDTK). Over residues 18-32 (DSEEDVPDLDASDDE) the composition is skewed to acidic residues. Positions 38–52 (VKSSKTKNKSKKKAK) are enriched in basic residues. The segment covering 58 to 67 (HLDEDVHEDL) has biased composition (basic and acidic residues). Composition is skewed to acidic residues over residues 124-153 (DAEE…DELA), 168-185 (ENEE…DEDD), and 202-211 (EDEDIEEDTK). Residues 233–261 (KTFNSLSLSRPVLKGLGSLGYTSPSPIQS) carry the Q motif motif. The Helicase ATP-binding domain occupies 264 to 439 (IPIALLGKDI…SLSLKKPVRI (176 aa)). Position 277–284 (277–284 (AVTGSGKT)) interacts with ATP. Residues 387 to 390 (DEAD) carry the DEAD box motif. In terms of domain architecture, Helicase C-terminal spans 468-628 (LLYQLIRKLD…TQVEQVNSLI (161 aa)). Residues 632 to 667 (GDVVEEIIEEEKQEKEILRAEMELRKGENMLKHKEE) adopt a coiled-coil conformation. Residues 687–748 (KMLQVLAKNK…YGKKGKKGKK (62 aa)) are disordered. Over residues 694-705 (KNKKPINSKKRK) the composition is skewed to basic residues. The segment covering 720 to 732 (TQKDRVEYQERQY) has biased composition (basic and acidic residues).

Belongs to the DEAD box helicase family. DDX27/DRS1 subfamily. As to quaternary structure, associates with pre-ribosomal particles.

It is found in the nucleus. The protein resides in the nucleolus. The catalysed reaction is ATP + H2O = ADP + phosphate + H(+). Its function is as follows. ATP-binding RNA helicase involved in ribosome assembly. This is ATP-dependent RNA helicase DRS1 (DRS1) from Kluyveromyces lactis (strain ATCC 8585 / CBS 2359 / DSM 70799 / NBRC 1267 / NRRL Y-1140 / WM37) (Yeast).